The primary structure comprises 1556 residues: Ubiquitin carboxyl-terminal hydrolase 47 (1556 aa).

Residues 117–231 (MKSDGEKAKS…AKKTAKVTSK (115 aa)) are disordered. Over residues 146–156 (ASGSSSPSKAK) the composition is skewed to low complexity. A phosphoserine mark is found at serine 172 and serine 173. Residues 180 to 189 (IKTTAAKISK) show a composition bias toward low complexity. A compositionally biased stretch (basic and acidic residues) spans 191–200 (GSEKAPRASP). A compositionally biased stretch (polar residues) spans 208-219 (TEINSKNTSSES). Serine 238 bears the Phosphoserine mark. The region spanning 396–779 (VGLVNQAMTC…NAYMLMYRQV (384 aa)) is the USP domain. The active-site Nucleophile is the cysteine 405. Composition is skewed to polar residues over residues 628–642 (NRSGNSGEQNSQLNG) and 661–673 (LSSGVVTTASSSQ). The interval 628–697 (NRSGNSGEQN…SSSTSKSAKQ (70 aa)) is disordered. A compositionally biased stretch (low complexity) spans 688–697 (SSSTSKSAKQ). Histidine 720 acts as the Proton acceptor in catalysis. The interval 1087–1148 (EPMSQPSPSH…LSSPEDEAAS (62 aa)) is disordered. Over residues 1109 to 1125 (DGDRTLVETDNMAHRGG) the composition is skewed to basic and acidic residues. Low complexity predominate over residues 1128–1141 (SQVSSTSHSPQLSS). Serine 1131, serine 1132, serine 1140, serine 1141, serine 1199, serine 1201, and serine 1205 each carry phosphoserine.

This sequence belongs to the peptidase C19 family. As to quaternary structure, interacts with ttk.

The protein localises to the nucleus. The catalysed reaction is Thiol-dependent hydrolysis of ester, thioester, amide, peptide and isopeptide bonds formed by the C-terminal Gly of ubiquitin (a 76-residue protein attached to proteins as an intracellular targeting signal).. Functionally, ubiquitin-specific protease that deubiquitinates target proteins to regulate different cellular and developmental pathways. Functions downstream of Dsor1/MEK to positively regulate the Ras/MAPK signaling pathway. Likely to modulate the pathway during various cellular and developmental processes including rl/MAPK activation by the receptors InR, Egfr and sevenless/sev. Functions in the post-translational stabilization of rl/MAPK levels in a mechanism that is independent of rl activity and opposes the activity of the E2 enzyme Unc6 and the putative E3 ligases poe, Ufd4 and Kcmf1, which mediate the ubiquitination and proteasomal degradation of rl. During eye development it may also act downstream of rl/MAPK to negatively regulate the Ras/MAPK signaling pathway by stabilizing the transcriptional repressor ttk and consequently inhibiting photoreceptor cell development. This suggests that at least during eye development, it may act in both the positive and negative regulation of the Ras/MAPK signaling pathway to mediate the development of different cell types. Positively regulates border follicle cell migration during oogenesis by mediating the deubiquitination and stabilization of slbo. In the wing disks it positively regulates wg signaling by stabilizing arm. Has an effect on position-effect variegation. In Drosophila melanogaster (Fruit fly), this protein is Ubiquitin carboxyl-terminal hydrolase 47.